Here is a 175-residue protein sequence, read N- to C-terminus: MRNNVTELVNSIIGVQTPGSLPDTLSGAHSLQRRISYFDVNWISWNWDNVNVDLNKEVKKSRPLLGEEDDQCMFGWFANNPGWKYYWSVTDNPDPGYKENYSDIGDENAVHGELYFNTYGGLMASVMTTKMVLNAKRQLVVIDTIVVKAICDYVMKYWKKKVNLTTISLYLMLKL.

The protein to yeast YER187w.

This is an uncharacterized protein from Saccharomyces cerevisiae (strain ATCC 204508 / S288c) (Baker's yeast).